We begin with the raw amino-acid sequence, 253 residues long: Uridylate kinase (253 aa).

26-29 (KLSG) provides a ligand contact to ATP. Gly-68 contributes to the UMP binding site. Gly-69 and Arg-73 together coordinate ATP. UMP is bound by residues Asp-88 and 149–156 (TGNPFFTT). ATP-binding residues include Thr-176, Tyr-182, and Asp-185.

The protein belongs to the UMP kinase family. In terms of assembly, homohexamer.

It is found in the cytoplasm. The enzyme catalyses UMP + ATP = UDP + ADP. It participates in pyrimidine metabolism; CTP biosynthesis via de novo pathway; UDP from UMP (UMPK route): step 1/1. Its activity is regulated as follows. Inhibited by UTP. In terms of biological role, catalyzes the reversible phosphorylation of UMP to UDP. The sequence is that of Uridylate kinase from Chromohalobacter salexigens (strain ATCC BAA-138 / DSM 3043 / CIP 106854 / NCIMB 13768 / 1H11).